An 88-amino-acid chain; its full sequence is uncharacterized protein (88 aa).

This is an uncharacterized protein from Haloarcula hispanica (His1V).